We begin with the raw amino-acid sequence, 134 residues long: MTKDQNGTWEMESNENFEGYMKALDIDFATRKIAVRLTQTKIIVQDGDNFKTKTNSTFRNYDLDFTVGVEFDEHTKGLDGRNVKTLVTWEGNTLVCVQKGEKENRGWKQWVEGDKLYLELTCGDQVCRQVFKKK.

Lysine 41 and glutamine 109 together coordinate all-trans-retinol.

It belongs to the calycin superfamily. Fatty-acid binding protein (FABP) family.

It localises to the cytoplasm. Functionally, intracellular transport of retinol. The chain is Retinol-binding protein 2 (Rbp2) from Rattus norvegicus (Rat).